The chain runs to 273 residues: DnaJ homolog subfamily C member 27 (273 aa).

Residues 23–30 (GNAEVGKS), 71–75 (DMAGH), and 134–137 (NKVD) each bind GTP. The J domain maps to 217-273 (DSWDMLGVKPGATREEVNKAYRKLAVLLHPDKCVAPGSEDAFKAVVNARTSLLKNIK).

This sequence belongs to the small GTPase superfamily. Rab family.

The protein localises to the nucleus. In terms of biological role, GTPase possibly involved in regulation of the MEK/ERK pathway. This Danio rerio (Zebrafish) protein is DnaJ homolog subfamily C member 27 (dnajc27).